Reading from the N-terminus, the 522-residue chain is Amine oxidase [flavin-containing] (522 aa).

Over 1–492 (MTAQNTFDVI…FWERNLPSVG (492 aa)) the chain is Cytoplasmic. C399 is subject to S-8alpha-FAD cysteine. Residues 493–513 (GFINFLAASVLSVATAAGMLA) form a helical; Anchor for type IV membrane protein membrane-spanning segment. Topologically, residues 514–522 (YQKGLLTRS) are mitochondrial intermembrane.

Belongs to the flavin monoamine oxidase family. Requires FAD as cofactor.

It localises to the mitochondrion outer membrane. It carries out the reaction a secondary aliphatic amine + O2 + H2O = a primary amine + an aldehyde + H2O2. Functionally, catalyzes the oxidative deamination of biogenic and xenobiotic amines and has important functions in the metabolism of neuroactive and vasoactive amines in the central nervous system and peripheral tissues. Oxidizes both 5-hydroxytryptamine (5-HT) and beta-phenylethylamine (PEA). The sequence is that of Amine oxidase [flavin-containing] (mao) from Oncorhynchus mykiss (Rainbow trout).